A 397-amino-acid polypeptide reads, in one-letter code: MALSRLSSSSSSSNGSNLFNPFSAAFTLNRPISSDTTATLTIETSLPFTAHNCDPPSRSVTTSPSELLSFFRTMALMRRMEIAADSLYKANLIRGFCHLYDGQEAVAVGMEAGTTKKDCIITAYRDHCTFLGRGGTLLRVYAELMGRRDGCSKGKGGSMHFYKKDSGFYGGHGIVGAQVPLGCGLAFGQKYLKDESVTFALYGDGAANQGQLFEALNISALWDLPAILVCENNHYGMGTATWRSAKSPAYFKRGDYVPGLKVDGMDALAVKQACKFAKEHALKNGPIILEMDTYRYHGHSMSDPGSTYRTRDEISGVRQERDPIERVRKLLLSHDIATEKELKDTEKEVRKEVDEAIAKAKDSPMPDPSDLFSNVYVKGYGVEAFGVDRKEVRVTLP.

His-98, Tyr-124, Arg-125, Gly-173, Val-175, Asp-204, Gly-205, Ala-206, Asn-233, and Tyr-235 together coordinate pyruvate. Thiamine diphosphate contacts are provided by Tyr-124, Arg-125, Gly-173, Val-175, Asp-204, Gly-205, Ala-206, and Asn-233. Residue Asp-204 participates in Mg(2+) binding. Mg(2+) contacts are provided by Asn-233 and Tyr-235. His-299 contacts thiamine diphosphate.

In terms of assembly, tetramer of 2 alpha and 2 beta subunits. It depends on thiamine diphosphate as a cofactor. The cofactor is Mg(2+).

The protein resides in the mitochondrion matrix. It catalyses the reaction N(6)-[(R)-lipoyl]-L-lysyl-[protein] + pyruvate + H(+) = N(6)-[(R)-S(8)-acetyldihydrolipoyl]-L-lysyl-[protein] + CO2. With respect to regulation, E1 activity is regulated by phosphorylation (inactivation) and dephosphorylation (activation) of the alpha subunit. In terms of biological role, the pyruvate dehydrogenase complex catalyzes the overall conversion of pyruvate to acetyl-CoA and CO(2). It contains multiple copies of three enzymatic components: pyruvate dehydrogenase (E1), dihydrolipoamide acetyltransferase (E2) and lipoamide dehydrogenase (E3). The sequence is that of Pyruvate dehydrogenase E1 component subunit alpha, mitochondrial from Pisum sativum (Garden pea).